The following is a 66-amino-acid chain: 14-3-3-like protein 2 (66 aa).

Belongs to the 14-3-3 family.

This chain is 14-3-3-like protein 2, found in Pseudotsuga menziesii (Douglas-fir).